Here is a 180-residue protein sequence, read N- to C-terminus: Large ribosomal subunit protein uL5 (180 aa).

The protein belongs to the universal ribosomal protein uL5 family. In terms of assembly, part of the 50S ribosomal subunit; part of the 5S rRNA/L5/L18/L25 subcomplex. Contacts the 5S rRNA and the P site tRNA. Forms a bridge to the 30S subunit in the 70S ribosome.

This is one of the proteins that bind and probably mediate the attachment of the 5S RNA into the large ribosomal subunit, where it forms part of the central protuberance. In the 70S ribosome it contacts protein S13 of the 30S subunit (bridge B1b), connecting the 2 subunits; this bridge is implicated in subunit movement. Contacts the P site tRNA; the 5S rRNA and some of its associated proteins might help stabilize positioning of ribosome-bound tRNAs. The protein is Large ribosomal subunit protein uL5 of Solibacter usitatus (strain Ellin6076).